A 117-amino-acid chain; its full sequence is Ribosome-binding factor A (117 aa).

Belongs to the RbfA family. Monomer. Binds 30S ribosomal subunits, but not 50S ribosomal subunits or 70S ribosomes.

It is found in the cytoplasm. In terms of biological role, one of several proteins that assist in the late maturation steps of the functional core of the 30S ribosomal subunit. Associates with free 30S ribosomal subunits (but not with 30S subunits that are part of 70S ribosomes or polysomes). Required for efficient processing of 16S rRNA. May interact with the 5'-terminal helix region of 16S rRNA. The chain is Ribosome-binding factor A from Nitrosomonas eutropha (strain DSM 101675 / C91 / Nm57).